The primary structure comprises 471 residues: Ribulose bisphosphate carboxylase large chain (471 aa).

Substrate-binding residues include Asn-115 and Thr-165. The active-site Proton acceptor is the Lys-167. Position 169 (Lys-169) interacts with substrate. The Mg(2+) site is built by Lys-193, Asp-195, and Glu-196. At Lys-193 the chain carries N6-carboxylysine. The active-site Proton acceptor is His-286. Positions 287, 319, and 371 each coordinate substrate.

It belongs to the RuBisCO large chain family. Type I subfamily. As to quaternary structure, heterohexadecamer of 8 large chains and 8 small chains. Forms a CsoS2-CsoS1-RuBisCO complex. It depends on Mg(2+) as a cofactor.

It is found in the carboxysome. It carries out the reaction 2 (2R)-3-phosphoglycerate + 2 H(+) = D-ribulose 1,5-bisphosphate + CO2 + H2O. It catalyses the reaction D-ribulose 1,5-bisphosphate + O2 = 2-phosphoglycolate + (2R)-3-phosphoglycerate + 2 H(+). RuBisCO catalyzes two reactions: the carboxylation of D-ribulose 1,5-bisphosphate, the primary event in carbon dioxide fixation, as well as the oxidative fragmentation of the pentose substrate in the photorespiration process. Both reactions occur simultaneously and in competition at the same active site. This chain is Ribulose bisphosphate carboxylase large chain, found in Parasynechococcus marenigrum (strain WH8102).